The sequence spans 555 residues: MPKFVFVTGGVVSSIGKGIVAASLGRLLKSRGYNVSILKLDPYLNVDPGTMSPFQHGEVFVTEDGAETDLDLGHYERFTDTALSRLNSVTTGSIYQSVINKERRGDYDGGTVQVIPHITQEIRERIHRVGANSNADVVITEIGGTVGDIESLPFLEAIREFKGDVGKKDIAYIHVTLLPFIGTSGELKTKPTQHSVKELRSIGIQPDLLICRSDRPINDNLKNKISGFCGVNNEAVIPALDADSIYSVPLALKAEGLCKEVLEFLDLTDHECNLEKWQELVHKLRNPGPSVKVAVVGKYVQLNDAYLSVVEALRHACIENDASLDLHWICAEKIEEEGSNDLLTGMDAIVVPGGFGSRGVDGKIAAIQWAREQRVPFLGLCLGMQCAVIEWARNLAGLKEATSFELDQSTPHPVIHLLPEQQDVVDLGGTMRLGVYPCRLQAETMGQKLYGEQVVYERHRHRYEFNNAYRNLFIESGYTISGTSPDGRLVELIELKGHPFFTACQYHPEFLSRPGKPHPLFKGLIAAAQSRLPRSPQEALKQTQINSPNQSKNNP.

Positions 1–267 are amidoligase domain; that stretch reads MPKFVFVTGG…CKEVLEFLDL (267 aa). Serine 13 is a binding site for CTP. Serine 13 provides a ligand contact to UTP. Residues 14–19 and aspartate 71 contribute to the ATP site; that span reads SIGKGI. Residues aspartate 71 and glutamate 141 each contribute to the Mg(2+) site. CTP-binding positions include 148-150, 188-193, and lysine 224; these read DIE and KTKPTQ. UTP contacts are provided by residues 188 to 193 and lysine 224; that span reads KTKPTQ. The region spanning 292–534 is the Glutamine amidotransferase type-1 domain; sequence KVAVVGKYVQ…IAAAQSRLPR (243 aa). Residue glycine 354 coordinates L-glutamine. Cysteine 381 serves as the catalytic Nucleophile; for glutamine hydrolysis. Residues 382–385, glutamate 405, and arginine 462 each bind L-glutamine; that span reads LGMQ. Active-site residues include histidine 507 and glutamate 509. The tract at residues 532–555 is disordered; sequence LPRSPQEALKQTQINSPNQSKNNP. Residues 540–555 show a composition bias toward polar residues; it reads LKQTQINSPNQSKNNP.

It belongs to the CTP synthase family. Homotetramer.

The catalysed reaction is UTP + L-glutamine + ATP + H2O = CTP + L-glutamate + ADP + phosphate + 2 H(+). It catalyses the reaction L-glutamine + H2O = L-glutamate + NH4(+). The enzyme catalyses UTP + NH4(+) + ATP = CTP + ADP + phosphate + 2 H(+). Its pathway is pyrimidine metabolism; CTP biosynthesis via de novo pathway; CTP from UDP: step 2/2. With respect to regulation, allosterically activated by GTP, when glutamine is the substrate; GTP has no effect on the reaction when ammonia is the substrate. The allosteric effector GTP functions by stabilizing the protein conformation that binds the tetrahedral intermediate(s) formed during glutamine hydrolysis. Inhibited by the product CTP, via allosteric rather than competitive inhibition. Catalyzes the ATP-dependent amination of UTP to CTP with either L-glutamine or ammonia as the source of nitrogen. Regulates intracellular CTP levels through interactions with the four ribonucleotide triphosphates. The protein is CTP synthase of Prochlorococcus marinus (strain MIT 9211).